Reading from the N-terminus, the 554-residue chain is Glucose-6-phosphate isomerase (554 aa).

The active-site Proton donor is E359. Residues H390 and K518 contribute to the active site.

Belongs to the GPI family.

It is found in the cytoplasm. It carries out the reaction alpha-D-glucose 6-phosphate = beta-D-fructose 6-phosphate. The protein operates within carbohydrate biosynthesis; gluconeogenesis. It functions in the pathway carbohydrate degradation; glycolysis; D-glyceraldehyde 3-phosphate and glycerone phosphate from D-glucose: step 2/4. In terms of biological role, catalyzes the reversible isomerization of glucose-6-phosphate to fructose-6-phosphate. The chain is Glucose-6-phosphate isomerase from Ectopseudomonas mendocina (strain ymp) (Pseudomonas mendocina).